Reading from the N-terminus, the 151-residue chain is 3-dehydroquinate dehydratase (151 aa).

Tyr-26 acts as the Proton acceptor in catalysis. Substrate-binding residues include Asn-75, His-81, and Asp-88. The Proton donor role is filled by His-101. Substrate contacts are provided by residues 102-103 (LS) and Arg-112.

Belongs to the type-II 3-dehydroquinase family. As to quaternary structure, homododecamer.

The catalysed reaction is 3-dehydroquinate = 3-dehydroshikimate + H2O. The protein operates within metabolic intermediate biosynthesis; chorismate biosynthesis; chorismate from D-erythrose 4-phosphate and phosphoenolpyruvate: step 3/7. In terms of biological role, catalyzes a trans-dehydration via an enolate intermediate. The polypeptide is 3-dehydroquinate dehydratase (Shewanella halifaxensis (strain HAW-EB4)).